The following is a 632-amino-acid chain: tRNA uridine 5-carboxymethylaminomethyl modification enzyme MnmG (632 aa).

FAD is bound by residues 15-20, I127, and S182; that span reads GAGHAG. 276 to 290 is a binding site for NAD(+); it reads GPRYCPSIEDKIVRF. An FAD-binding site is contributed by Q373.

The protein belongs to the MnmG family. As to quaternary structure, homodimer. Heterotetramer of two MnmE and two MnmG subunits. FAD serves as cofactor.

It localises to the cytoplasm. Functionally, NAD-binding protein involved in the addition of a carboxymethylaminomethyl (cmnm) group at the wobble position (U34) of certain tRNAs, forming tRNA-cmnm(5)s(2)U34. The polypeptide is tRNA uridine 5-carboxymethylaminomethyl modification enzyme MnmG (Streptococcus pyogenes serotype M12 (strain MGAS2096)).